Consider the following 387-residue polypeptide: Methyltransferase phomM (387 aa).

Residues 98-223 (PHRPKDLHIL…QSVADLFTTL (126 aa)) form a methyltransferase domain region.

The protein belongs to the class I-like SAM-binding methyltransferase superfamily. Erg6/SMT family.

It participates in mycotoxin biosynthesis. In terms of biological role, methyltransferase; part of the gene cluster that mediates the biosynthesis of the phomopsins, a group of hexapeptide mycotoxins which infects lupins and causes lupinosis disease in livestock. Within the pathway, phomM acts as an S-adenosylmethionine-dependent alpha-N-methyltransferase that catalyzes two successive N-methylation reactions, converting N-desmethyl-phomopsin A to phomopsin A and phomopsin A further to an N,N-dimethylated congener called phomopsin E. The pathway starts with the processing of the precursor phomA by several endopeptidases including kexin proteases as well as the cluster-specific S41 family peptidase phomP1 and the oligopeptidase phomG to produce 10 identical copies of the hexapeptide Tyr-Val-Ile-Pro-Ile-Asp. After being excised from the precursor peptide, the core peptides are cyclized and modified post-translationally by enzymes encoded within the gene cluster. The timing and order of proteolysis of the phomA precursor and PTMs are still unknown. Two tyrosinase-like enzymes, phomQ1 and phomQ2, catalyze the chlorination and hydroxylation of Tyr, respectively. PhomYb, is proposed to be involved in the construction of the macrocyclic structure. The other 4 ustYa family proteins may be involved in PTMs that generate the unique structure of phomopsin A. PhomYa is required for the hydroxylation of C-beta of Tyr. PhomYc, phomYd, and phomYe are responsible for the biosynthesis of 2,3-dehydroisoleucine (dIle), 2,3-dehydroaspartic acid (dAsp), and 3,4-dehydroproline (dPro), respectively. While dIle formation by phomYc is indispensable for the installation of dAsp by phomYd, the order of the other PTMs have not been elucidated yet. Most of the biosynthetic enzymes likely have broad substrate specificity, and thus, there might be a metabolic grid from a precursor to phomopsin A. The enzyme(s) responsible for the biosynthesis of 3,4-dehydrovaline (dVal) have also not been identified yet. Finally, phomM acts as an S-adenosylmethionine-dependent alpha-N-methyltransferase that catalyzes two successive N-methylation reactions, converting N-desmethyl-phomopsin A to phomopsin A and phomopsin A further to an N,N-dimethylated congener called phomopsin E. This chain is Methyltransferase phomM, found in Diaporthe leptostromiformis (Lupinosis disease fungus).